We begin with the raw amino-acid sequence, 208 residues long: RNA-binding protein KhpB (208 aa).

The segment at 5-55 (TAAGRNVDEAVQSGLQELGLTKDKVEITVIEEGNKGFLGIFGKKPAIVKLV) is jag_N domain. Positions 58–135 (IDPIQQAKLY…GQYKNVTVDA (78 aa)) constitute a KH domain. The region spanning 140–208 (LKRKETLSQL…NRHLVISHKR (69 aa)) is the R3H domain.

It belongs to the KhpB RNA-binding protein family. As to quaternary structure, forms a complex with KhpA.

It is found in the cytoplasm. Functionally, a probable RNA chaperone. Forms a complex with KhpA which binds to cellular RNA and controls its expression. Plays a role in peptidoglycan (PG) homeostasis and cell length regulation. The protein is RNA-binding protein KhpB of Bacillus subtilis (strain 168).